The following is a 364-amino-acid chain: WAT1-related protein At3g30340 (364 aa).

10 helical membrane-spanning segments follow: residues 9–29, 41–61, 76–96, 102–122, 138–158, 183–203, 215–235, 251–271, 277–297, and 304–324; these read WKAV…NVMF, VATT…AIFL, SLFF…LIGL, TFSL…ALVF, LLGT…KGTA, WAMG…WFIV, YTST…LSLI, VLAL…GMSW, GAVF…IFSF, and IYCG…ILLW. EamA domains follow at residues 26–152 and 195–323; these read NVMF…LVLT and IIWS…YILL.

Belongs to the drug/metabolite transporter (DMT) superfamily. Plant drug/metabolite exporter (P-DME) (TC 2.A.7.4) family.

It is found in the membrane. In Arabidopsis thaliana (Mouse-ear cress), this protein is WAT1-related protein At3g30340.